The sequence spans 148 residues: Deoxyuridine 5'-triphosphate nucleotidohydrolase (148 aa).

Substrate contacts are provided by residues 68-70 (RSG), Asn81, 85-87 (TID), and Lys95.

This sequence belongs to the dUTPase family. It depends on Mg(2+) as a cofactor.

The catalysed reaction is dUTP + H2O = dUMP + diphosphate + H(+). It functions in the pathway pyrimidine metabolism; dUMP biosynthesis; dUMP from dCTP (dUTP route): step 2/2. This enzyme is involved in nucleotide metabolism: it produces dUMP, the immediate precursor of thymidine nucleotides and it decreases the intracellular concentration of dUTP so that uracil cannot be incorporated into DNA. The sequence is that of Deoxyuridine 5'-triphosphate nucleotidohydrolase from Rickettsia massiliae (strain Mtu5).